A 194-amino-acid polypeptide reads, in one-letter code: ATP-dependent Clp protease proteolytic subunit (194 aa).

S98 acts as the Nucleophile in catalysis. The active site involves H123.

Belongs to the peptidase S14 family. As to quaternary structure, component of the chloroplastic Clp protease core complex.

The protein localises to the plastid. Its subcellular location is the cyanelle. The enzyme catalyses Hydrolysis of proteins to small peptides in the presence of ATP and magnesium. alpha-casein is the usual test substrate. In the absence of ATP, only oligopeptides shorter than five residues are hydrolyzed (such as succinyl-Leu-Tyr-|-NHMec, and Leu-Tyr-Leu-|-Tyr-Trp, in which cleavage of the -Tyr-|-Leu- and -Tyr-|-Trp bonds also occurs).. In terms of biological role, cleaves peptides in various proteins in a process that requires ATP hydrolysis. Has a chymotrypsin-like activity. Plays a major role in the degradation of misfolded proteins. This chain is ATP-dependent Clp protease proteolytic subunit (clpP-A), found in Cyanophora paradoxa.